The following is a 265-amino-acid chain: tRNA (guanine-N(7)-)-methyltransferase (265 aa).

Over residues 1–16 (MNHDDPNASGVPHDDA) the composition is skewed to basic and acidic residues. The interval 1 to 40 (MNHDDPNASGVPHDDANDAAPASASDAARATGHADDESSP) is disordered. The span at 18–31 (DAAPASASDAARAT) shows a compositional bias: low complexity. Glu-95, Glu-120, Asp-147, and Asp-170 together coordinate S-adenosyl-L-methionine. Residue Asp-170 is part of the active site. Residues Lys-174, Asp-206, and 241–244 (TKFE) contribute to the substrate site.

The protein belongs to the class I-like SAM-binding methyltransferase superfamily. TrmB family.

It catalyses the reaction guanosine(46) in tRNA + S-adenosyl-L-methionine = N(7)-methylguanosine(46) in tRNA + S-adenosyl-L-homocysteine. It functions in the pathway tRNA modification; N(7)-methylguanine-tRNA biosynthesis. Functionally, catalyzes the formation of N(7)-methylguanine at position 46 (m7G46) in tRNA. In Burkholderia thailandensis (strain ATCC 700388 / DSM 13276 / CCUG 48851 / CIP 106301 / E264), this protein is tRNA (guanine-N(7)-)-methyltransferase.